An 89-amino-acid polypeptide reads, in one-letter code: Cornifin-B (89 aa).

The tract at residues 1–29 is disordered; that stretch reads MSSQQQKQPCTPPPQLQQQQVKQPCQPPP. 8 repeat units span residues 3-14, 18-29, 31-38, 39-46, 47-54, 55-62, 63-70, and 71-78. Residues 3 to 29 are 2 X 12 AA approximate repeats; it reads SQQQKQPCTPPPQLQQQQVKQPCQPPP. The tract at residues 31–78 is 6 X 8 AA approximate tandem repeats; it reads EPCIPKTKEPCHPKVPEPCHPKVPEPCQPKVPEPCHPKVPEPCPSIVT.

Belongs to the cornifin (SPRR) family. In terms of processing, the N-terminus is blocked. In terms of tissue distribution, suprabasal layers of squamous-differentiated tissues such as epidermis, esophagus, tongue and trachea.

The protein resides in the cytoplasm. In terms of biological role, cross-linked envelope protein of keratinocytes. It is a keratinocyte protein that first appears in the cell cytosol, but ultimately becomes cross-linked to membrane proteins by transglutaminase. All that results in the formation of an insoluble envelope beneath the plasma membrane. Can function as both amine donor and acceptor in transglutaminase-mediated cross-linkage. The sequence is that of Cornifin-B (SPRR1B) from Homo sapiens (Human).